The following is a 338-amino-acid chain: Anthranilate phosphoribosyltransferase (338 aa).

Residues G78, 81–82 (GD), T86, 88–91 (NIST), 106–114 (KHGNRSVSS), and S118 each bind 5-phospho-alpha-D-ribose 1-diphosphate. G78 contacts anthranilate. Residue S90 coordinates Mg(2+). N109 provides a ligand contact to anthranilate. R164 lines the anthranilate pocket. D223 and E224 together coordinate Mg(2+).

Belongs to the anthranilate phosphoribosyltransferase family. In terms of assembly, homodimer. The cofactor is Mg(2+).

It catalyses the reaction N-(5-phospho-beta-D-ribosyl)anthranilate + diphosphate = 5-phospho-alpha-D-ribose 1-diphosphate + anthranilate. Its pathway is amino-acid biosynthesis; L-tryptophan biosynthesis; L-tryptophan from chorismate: step 2/5. Functionally, catalyzes the transfer of the phosphoribosyl group of 5-phosphorylribose-1-pyrophosphate (PRPP) to anthranilate to yield N-(5'-phosphoribosyl)-anthranilate (PRA). This is Anthranilate phosphoribosyltransferase from Bacillus licheniformis (strain ATCC 14580 / DSM 13 / JCM 2505 / CCUG 7422 / NBRC 12200 / NCIMB 9375 / NCTC 10341 / NRRL NRS-1264 / Gibson 46).